Consider the following 722-residue polypeptide: Ribosomal RNA large subunit methyltransferase K/L (722 aa).

Residues 43-154 form the THUMP domain; it reads IGLRACLWSR…GNEGRVGIDL (112 aa).

This sequence belongs to the methyltransferase superfamily. RlmKL family.

The protein resides in the cytoplasm. It catalyses the reaction guanosine(2445) in 23S rRNA + S-adenosyl-L-methionine = N(2)-methylguanosine(2445) in 23S rRNA + S-adenosyl-L-homocysteine + H(+). It carries out the reaction guanosine(2069) in 23S rRNA + S-adenosyl-L-methionine = N(2)-methylguanosine(2069) in 23S rRNA + S-adenosyl-L-homocysteine + H(+). Functionally, specifically methylates the guanine in position 2445 (m2G2445) and the guanine in position 2069 (m7G2069) of 23S rRNA. The chain is Ribosomal RNA large subunit methyltransferase K/L from Magnetococcus marinus (strain ATCC BAA-1437 / JCM 17883 / MC-1).